A 420-amino-acid polypeptide reads, in one-letter code: MEFPEHGVRLLGRLRQQRELGFLCDCTVLVGDARFPAHRAVLAACSVYFHLFYRDQPASSRDTVRLNGDIVTVPAFSRLLDFMYEGRLDLHSLPVEDVLAAASYLHMYDIVKVCKGRLRKKDPDLETRTLGTELPGQTPHPLPSWPPAFCQATPKAKPPSLGVKAVHPLPKFGPPSWQVSEESSGALDLSLKPGPRPEQAHPPCLLQTSQCSSIQQGAQPLVKAEQDSFSEQDSSSPQSADRSPPPVCASAARGLAVNLEPLHIQGTGSQQLGLHAEPVVDSEDLGPGRHLCICPLCCKLFPSTHALQPHLSAHFRERDSVRTRLSPEGAVPTCPLCSKTFSCTYTLKRHERTHSGEKPYTCVQCGKSFQYSHNLSRHAVVHTREKPHACRWCERRFTQSGDLYRHVRKFHYGLVKPLLV.

The 69-residue stretch at Cys24–Ser92 folds into the BTB domain. Disordered regions lie at residues Pro174–Cys204 and Gln216–Cys248. Low complexity predominate over residues Asp227–Asp241. C2H2-type zinc fingers lie at residues Cys292–His314, Pro332–His354, Tyr360–His382, and His388–His411.

Belongs to the krueppel C2H2-type zinc-finger protein family. ZBTB18 subfamily.

The protein resides in the cytoplasm. Its subcellular location is the nucleus. The protein localises to the nucleoplasm. Functionally, transcriptional repressor. Specifically binds DNA and probably acts by recruiting chromatin remodeling multiprotein complexes. The sequence is that of Zinc finger and BTB domain-containing protein 42 (Zbtb42) from Rattus norvegicus (Rat).